The chain runs to 2961 residues: Zinc finger ZZ-type and EF-hand domain-containing protein 1 (2961 aa).

The interval 1-41 is disordered; the sequence is MGNAPSHSSEDEAAAAGGEGWGPHQDWAAVSGTTPGPGVAA. Residue G2 is the site of N-myristoyl glycine attachment. Residues 111 to 146 form the EF-hand domain; it reads CSSEQFEEAFAQFDAEGDGTVDAENMLEALKNSSGA. A DOC domain is found at 226–405; sequence LVQKEKESPG…AIWYWSLLTS (180 aa). Residues S240, S1475, S1488, and S1509 each carry the phosphoserine modification. A disordered region spans residues 1446–1531; sequence TADETSHLQP…PTRRPPFTRG (86 aa). Polar residues predominate over residues 1485 to 1502; that stretch reads GDQSPGLGTQPKLPSSSG. The residue at position 1512 (T1512) is a Phosphothreonine. Residues 1516-1531 show a composition bias toward low complexity; it reads PLSPSTPTRRPPFTRG. Residue S1518 is modified to Phosphoserine. T1521 and T1523 each carry phosphothreonine. Phosphoserine occurs at positions 1537 and 1540. 2 ZZ-type zinc fingers span residues 1778 to 1833 and 1827 to 1882; these read NVDI…FTCD and NMEF…MVTI. Zn(2+)-binding residues include C1783, C1786, C1797, C1800, C1806, C1809, H1819, H1823, C1832, C1835, C1846, C1849, C1855, C1858, H1868, and H1872. Disordered stretches follow at residues 1994–2078 and 2426–2455; these read AVQG…PSPE and LELD…KLDP. Residues 2009–2027 are compositionally biased toward basic and acidic residues; sequence AVHEEIRPVDFKQRNKADK. The segment covering 2033–2043 has biased composition (polar residues); the sequence is KDPSCQTQISD. Positions 2426-2440 are enriched in basic and acidic residues; the sequence is LELDERGDREEEVER. Phosphoserine is present on S2444. K2667 is modified (N6-acetyllysine).

Interacts with KLF6 and KLF9. Interacts via (ZZ-type 2 zinc finger) with histone H3 trimethylated at 'Lys-4' (H3K4me3) and histone H3 acetylated at 'Lys-4' (H3K4ac). In terms of tissue distribution, expressed at low levels in cerebellum.

Its function is as follows. Histone H3 reader which may act as a transcriptional coactivator for KLF6 and KLF9 transcription factors. This is Zinc finger ZZ-type and EF-hand domain-containing protein 1 from Homo sapiens (Human).